The following is a 408-amino-acid chain: Digeranylgeranylglycerophospholipid reductase 1 (408 aa).

FAD contacts are provided by Ala15, Glu34, Cys45, Ala46, Gly48, Arg99, Val123, Asp279, Gly291, and Ile292.

It belongs to the geranylgeranyl reductase family. DGGGPL reductase subfamily. The cofactor is FAD.

The catalysed reaction is a 2,3-bis-O-phytanyl-sn-glycerol 1-phospholipid + 8 oxidized 2[4Fe-4S]-[ferredoxin] = a 2,3-bis-O-(geranylgeranyl)-sn-glycerol 1-phospholipid + 8 reduced 2[4Fe-4S]-[ferredoxin] + 16 H(+). It catalyses the reaction 2,3-bis-O-(phytanyl)-sn-glycerol 1-phosphate + 8 oxidized 2[4Fe-4S]-[ferredoxin] = 2,3-bis-O-(geranylgeranyl)-sn-glycerol 1-phosphate + 8 reduced 2[4Fe-4S]-[ferredoxin] + 16 H(+). It carries out the reaction a 2,3-bis-O-phytanyl-sn-glycerol 1-phospholipid + 8 A = a 2,3-bis-O-(geranylgeranyl)-sn-glycerol 1-phospholipid + 8 AH2. The enzyme catalyses CDP-2,3-bis-O-(geranylgeranyl)-sn-glycerol + 8 AH2 = CDP-2,3-bis-O-(phytanyl)-sn-glycerol + 8 A. The catalysed reaction is archaetidylserine + 8 AH2 = 2,3-bis-O-phytanyl-sn-glycero-3-phospho-L-serine + 8 A. Its pathway is membrane lipid metabolism; glycerophospholipid metabolism. In terms of biological role, is involved in the reduction of 2,3-digeranylgeranylglycerophospholipids (unsaturated archaeols) into 2,3-diphytanylglycerophospholipids (saturated archaeols) in the biosynthesis of archaeal membrane lipids. Catalyzes the formation of archaetidic acid (2,3-di-O-phytanyl-sn-glyceryl phosphate) from 2,3-di-O-geranylgeranylglyceryl phosphate (DGGGP) via the hydrogenation of each double bond of the isoprenoid chains. Is also probably able to reduce double bonds of geranyl groups in CDP-2,3-bis-O-(geranylgeranyl)-sn-glycerol and archaetidylserine, thus acting at various stages in the biosynthesis of archaeal membrane lipids. In Methanococcoides burtonii (strain DSM 6242 / NBRC 107633 / OCM 468 / ACE-M), this protein is Digeranylgeranylglycerophospholipid reductase 1.